A 354-amino-acid polypeptide reads, in one-letter code: MLARVWVRGLAATKKKPQVLVKDGPSLQDFISSASVAEAVEKYEGKLKLEKGDRRLRLPPWLKKEKILPSENENVSRLKKQLKHLKLATVCQEARCPNLGECWGGSDDSLATATIMLMGDTCTRGCKFCSVKTARAPPPLDPMEPENTSTAVASWGVEYIVLTSVDRDDLPDGGADHLRKTVQLMKLKKPELLIECLLPDFAGDKISVEKMATSGLDVYAHNIETVERLTPWVRDPRAKYRQSLDALRYAKEVSPKLITKTSIMLGLGEAEDEIKQCLADLRASNVDVVTFGQYMQPTKRHLLVKEWVTPEKFDQWAEYSKKLGFLYVASGPLVRSSYKAGEFYLKNVLRNRQN.

Cysteine 91, cysteine 96, cysteine 102, cysteine 122, cysteine 126, cysteine 129, and serine 337 together coordinate [4Fe-4S] cluster. In terms of domain architecture, Radical SAM core spans 107-326 (DDSLATATIM…AEYSKKLGFL (220 aa)).

This sequence belongs to the radical SAM superfamily. Lipoyl synthase family. [4Fe-4S] cluster serves as cofactor.

Its subcellular location is the mitochondrion. The enzyme catalyses [[Fe-S] cluster scaffold protein carrying a second [4Fe-4S](2+) cluster] + N(6)-octanoyl-L-lysyl-[protein] + 2 oxidized [2Fe-2S]-[ferredoxin] + 2 S-adenosyl-L-methionine + 4 H(+) = [[Fe-S] cluster scaffold protein] + N(6)-[(R)-dihydrolipoyl]-L-lysyl-[protein] + 4 Fe(3+) + 2 hydrogen sulfide + 2 5'-deoxyadenosine + 2 L-methionine + 2 reduced [2Fe-2S]-[ferredoxin]. The protein operates within protein modification; protein lipoylation via endogenous pathway; protein N(6)-(lipoyl)lysine from octanoyl-[acyl-carrier-protein]: step 2/2. In terms of biological role, catalyzes the radical-mediated insertion of two sulfur atoms into the C-6 and C-8 positions of the octanoyl moiety bound to the lipoyl domains of lipoate-dependent enzymes, thereby converting the octanoylated domains into lipoylated derivatives. The polypeptide is Lipoyl synthase, mitochondrial (Caenorhabditis elegans).